A 150-amino-acid polypeptide reads, in one-letter code: Large ribosomal subunit protein bL9 (150 aa).

This sequence belongs to the bacterial ribosomal protein bL9 family.

Binds to the 23S rRNA. The sequence is that of Large ribosomal subunit protein bL9 from Streptococcus agalactiae serotype III (strain NEM316).